Consider the following 251-residue polypeptide: NADPH-dependent oxidoreductase (251 aa).

It belongs to the flavin oxidoreductase frp family. FMN serves as cofactor.

Its function is as follows. Reduces FMN, organic nitro compounds and disulfide DTNB. Involved in maintenance of the cellular redox state and the disulfide stress response. This is NADPH-dependent oxidoreductase (nfrA) from Staphylococcus epidermidis (strain ATCC 12228 / FDA PCI 1200).